We begin with the raw amino-acid sequence, 440 residues long: GTPase Der (440 aa).

EngA-type G domains are found at residues 4–168 and 177–352; these read PIVA…PENK and IKVA…NQRA. GTP contacts are provided by residues 10 to 17, 57 to 61, 120 to 123, 183 to 190, 230 to 234, and 295 to 298; these read GRPNVGKS, DTGGI, NKVD, GKPNVGKS, DTAGL, and NKWD. Residues 353 to 437 form the KH-like domain; that stretch reads MRVPTGGLNE…PIRFIYREKS (85 aa).

Belongs to the TRAFAC class TrmE-Era-EngA-EngB-Septin-like GTPase superfamily. EngA (Der) GTPase family. In terms of assembly, associates with the 50S ribosomal subunit.

Functionally, GTPase that plays an essential role in the late steps of ribosome biogenesis. In Alkaliphilus metalliredigens (strain QYMF), this protein is GTPase Der.